Consider the following 495-residue polypeptide: Pentatricopeptide repeat-containing protein PPR5 homolog, chloroplastic (495 aa).

Positions 1 to 24 (MLAYPTTSSPWPPRHHGAAAAPAA) are disordered. Residues 1–29 (MLAYPTTSSPWPPRHHGAAAAPAARRHMA) constitute a chloroplast transit peptide. PPR repeat units follow at residues 120 to 154 (DNGI…GCRP), 155 to 189 (DTSV…MKTI), 195 to 229 (NIVT…PVSP), 230 to 264 (DIYT…QCRP), 265 to 299 (DVIT…KEKP), 300 to 334 (THPT…GFKP), 335 to 365 (NYVT…LVSS), 370 to 404 (HLSS…GAVP), and 405 to 439 (SAST…GIVP). A disordered region spans residues 455 to 495 (DKKPRTVPSKNSASKPDVESANNSGTDTSSKPNLSVWQVAA). Polar residues predominate over residues 462–495 (PSKNSASKPDVESANNSGTDTSSKPNLSVWQVAA).

Belongs to the PPR family. P subfamily.

It localises to the plastid. The protein localises to the chloroplast. Involved in the biogenesis of the plastid translation machinery by promoting the splicing of group II introns in chloroplasts. The protein is Pentatricopeptide repeat-containing protein PPR5 homolog, chloroplastic of Oryza sativa subsp. japonica (Rice).